Consider the following 217-residue polypeptide: ATP phosphoribosyltransferase (217 aa).

It belongs to the ATP phosphoribosyltransferase family. Short subfamily. Heteromultimer composed of HisG and HisZ subunits.

The protein resides in the cytoplasm. It carries out the reaction 1-(5-phospho-beta-D-ribosyl)-ATP + diphosphate = 5-phospho-alpha-D-ribose 1-diphosphate + ATP. It functions in the pathway amino-acid biosynthesis; L-histidine biosynthesis; L-histidine from 5-phospho-alpha-D-ribose 1-diphosphate: step 1/9. Catalyzes the condensation of ATP and 5-phosphoribose 1-diphosphate to form N'-(5'-phosphoribosyl)-ATP (PR-ATP). Has a crucial role in the pathway because the rate of histidine biosynthesis seems to be controlled primarily by regulation of HisG enzymatic activity. The polypeptide is ATP phosphoribosyltransferase (Synechococcus sp. (strain WH7803)).